We begin with the raw amino-acid sequence, 1267 residues long: Probable ATP-dependent RNA helicase DHR1 (1267 aa).

3 disordered regions span residues 1 to 67 (MGTY…EPLT), 168 to 233 (YEPK…SNIK), and 255 to 313 (EELK…DQND). Composition is skewed to basic and acidic residues over residues 7 to 25 (RFNEKARSGHMAKLKELKR) and 32 to 43 (TRQDENDERVEN). Positions 175 to 192 (EYGEGGSSEDDDGEDDFE) are enriched in acidic residues. Serine 181 is subject to Phosphoserine. Basic and acidic residues predominate over residues 202-217 (TDNEEKKSSGFIDHRP). Over residues 264 to 284 (DEMDFDTTSEDDDEEEDQEEE) the composition is skewed to acidic residues. In terms of domain architecture, Helicase ATP-binding spans 401–580 (MEAIHHNDVV…KTLFPIAPPV (180 aa)). 414–421 (GETGSGKT) contacts ATP. Residues 516 to 519 (DEAH) carry the DEAH box motif. Residues 675-858 (DIDFSVQVID…SIVLQMKSMA (184 aa)) enclose the Helicase C-terminal domain. 2 disordered regions span residues 693-720 (RYEEDEGNSGNGEDEEDEEEEGFEEVLT) and 955-976 (PNPDENLDDKIREHDESTPGMD). Over residues 695–719 (EEDEGNSGNGEDEEDEEEEGFEEVL) the composition is skewed to acidic residues.

Belongs to the DEAD box helicase family. DEAH subfamily. In terms of assembly, interacts with snoRNA U3. Component of the ribosomal small subunit (SSU) processome composed of at least 40 protein subunits and snoRNA U3.

The protein resides in the nucleus. It localises to the nucleolus. The enzyme catalyses ATP + H2O = ADP + phosphate + H(+). Probable ATP-binding RNA helicase. Required for 18S rRNA synthesis. May play a role in restructuring of the pre-rRNA. This is Probable ATP-dependent RNA helicase DHR1 (ECM16) from Saccharomyces cerevisiae (strain ATCC 204508 / S288c) (Baker's yeast).